Consider the following 489-residue polypeptide: Probable guanine deaminase (489 aa).

2 residues coordinate Zn(2+): H100 and H102. Substrate-binding positions include 102–105, 231–232, 258–261, and D348; these read HVSQ, RF, and HLSE. Positions 258 and 348 each coordinate Zn(2+).

It belongs to the metallo-dependent hydrolases superfamily. ATZ/TRZ family. The cofactor is Zn(2+).

It localises to the cytoplasm. It carries out the reaction guanine + H2O + H(+) = xanthine + NH4(+). It functions in the pathway purine metabolism; guanine degradation; xanthine from guanine: step 1/1. Its function is as follows. Catalyzes the hydrolytic deamination of guanine, producing xanthine and ammonia. The protein is Probable guanine deaminase (GUD1) of Saccharomyces cerevisiae (strain ATCC 204508 / S288c) (Baker's yeast).